The sequence spans 859 residues: Leucine--tRNA ligase (859 aa).

Residues 42 to 52 carry the 'HIGH' region motif; the sequence is PYPSGRLHMGH. Residues 618-622 carry the 'KMSKS' region motif; that stretch reads KMSKS. An ATP-binding site is contributed by lysine 621.

Belongs to the class-I aminoacyl-tRNA synthetase family.

It is found in the cytoplasm. It carries out the reaction tRNA(Leu) + L-leucine + ATP = L-leucyl-tRNA(Leu) + AMP + diphosphate. The polypeptide is Leucine--tRNA ligase (Shewanella baltica (strain OS223)).